Consider the following 300-residue polypeptide: Porphobilinogen deaminase (300 aa).

Cysteine 239 is modified (S-(dipyrrolylmethanemethyl)cysteine).

The protein belongs to the HMBS family. In terms of assembly, monomer. Dipyrromethane is required as a cofactor.

It catalyses the reaction 4 porphobilinogen + H2O = hydroxymethylbilane + 4 NH4(+). It participates in porphyrin-containing compound metabolism; protoporphyrin-IX biosynthesis; coproporphyrinogen-III from 5-aminolevulinate: step 2/4. Its function is as follows. Tetrapolymerization of the monopyrrole PBG into the hydroxymethylbilane pre-uroporphyrinogen in several discrete steps. This chain is Porphobilinogen deaminase, found in Francisella tularensis subsp. novicida (strain U112).